Consider the following 503-residue polypeptide: NAD(P)H-quinone oxidoreductase chain 4, chloroplastic (503 aa).

The next 13 helical transmembrane spans lie at Phe4–Leu24, Ile37–Leu57, Ile87–Val107, Leu134–Met154, Phe167–Leu187, Ala208–Ile228, His242–Val262, Ala272–Ala292, Ile305–Asp325, Gly330–Gly350, Leu386–Thr406, Ile416–Met436, and Leu462–Val482.

The protein belongs to the complex I subunit 4 family.

The protein localises to the plastid. The protein resides in the chloroplast thylakoid membrane. It catalyses the reaction a plastoquinone + NADH + (n+1) H(+)(in) = a plastoquinol + NAD(+) + n H(+)(out). It carries out the reaction a plastoquinone + NADPH + (n+1) H(+)(in) = a plastoquinol + NADP(+) + n H(+)(out). This is NAD(P)H-quinone oxidoreductase chain 4, chloroplastic from Drimys granadensis.